Here is a 132-residue protein sequence, read N- to C-terminus: DNA-directed RNA polymerase subunit Rpo8 (132 aa).

It belongs to the archaeal Rpo8 RNA polymerase subunit family. In terms of assembly, part of the 13-subunit RNA polymerase complex.

The protein resides in the cytoplasm. It carries out the reaction RNA(n) + a ribonucleoside 5'-triphosphate = RNA(n+1) + diphosphate. DNA-dependent RNA polymerase (RNAP) catalyzes the transcription of DNA into RNA using the four ribonucleoside triphosphates as substrates. The chain is DNA-directed RNA polymerase subunit Rpo8 from Saccharolobus solfataricus (strain ATCC 35092 / DSM 1617 / JCM 11322 / P2) (Sulfolobus solfataricus).